A 395-amino-acid chain; its full sequence is 1-deoxy-D-xylulose 5-phosphate reductoisomerase (395 aa).

Residues Thr-15, Gly-16, Ser-17, Ile-18, Gly-41, Asn-43, and Asn-126 each contribute to the NADPH site. Lys-127 contacts 1-deoxy-D-xylulose 5-phosphate. Glu-128 provides a ligand contact to NADPH. Asp-152 serves as a coordination point for Mn(2+). Positions 153, 154, 178, and 201 each coordinate 1-deoxy-D-xylulose 5-phosphate. Glu-154 provides a ligand contact to Mn(2+). Residue Gly-207 coordinates NADPH. 1-deoxy-D-xylulose 5-phosphate is bound by residues Ser-214, Asn-219, Lys-220, and Glu-223. Glu-223 contributes to the Mn(2+) binding site.

It belongs to the DXR family. Mg(2+) is required as a cofactor. It depends on Mn(2+) as a cofactor.

The catalysed reaction is 2-C-methyl-D-erythritol 4-phosphate + NADP(+) = 1-deoxy-D-xylulose 5-phosphate + NADPH + H(+). It functions in the pathway isoprenoid biosynthesis; isopentenyl diphosphate biosynthesis via DXP pathway; isopentenyl diphosphate from 1-deoxy-D-xylulose 5-phosphate: step 1/6. Its function is as follows. Catalyzes the NADPH-dependent rearrangement and reduction of 1-deoxy-D-xylulose-5-phosphate (DXP) to 2-C-methyl-D-erythritol 4-phosphate (MEP). The polypeptide is 1-deoxy-D-xylulose 5-phosphate reductoisomerase (Ruegeria pomeroyi (strain ATCC 700808 / DSM 15171 / DSS-3) (Silicibacter pomeroyi)).